Here is a 209-residue protein sequence, read N- to C-terminus: Octanoyltransferase (209 aa).

Residues 30 to 209 enclose the BPL/LPL catalytic domain; it reads DHKPEIIYLV…IQTEFNKIFK (180 aa). Residues 69–76, 143–145, and 156–158 contribute to the substrate site; these read RGGKFTFH, AIG, and GVA. Cysteine 174 functions as the Acyl-thioester intermediate in the catalytic mechanism.

This sequence belongs to the LipB family.

Its subcellular location is the cytoplasm. It carries out the reaction octanoyl-[ACP] + L-lysyl-[protein] = N(6)-octanoyl-L-lysyl-[protein] + holo-[ACP] + H(+). Its pathway is protein modification; protein lipoylation via endogenous pathway; protein N(6)-(lipoyl)lysine from octanoyl-[acyl-carrier-protein]: step 1/2. Its function is as follows. Catalyzes the transfer of endogenously produced octanoic acid from octanoyl-acyl-carrier-protein onto the lipoyl domains of lipoate-dependent enzymes. Lipoyl-ACP can also act as a substrate although octanoyl-ACP is likely to be the physiological substrate. The polypeptide is Octanoyltransferase (Rickettsia conorii (strain ATCC VR-613 / Malish 7)).